The primary structure comprises 406 residues: Transcriptional activator NprA (406 aa).

TPR repeat units lie at residues 125–158 (YYYYKFLGLLYYCKEKYEDALEYYKKAEQRFRSQ), 206–239 (AECHILLGICYRRYGEVDQAIECYSLAHKIAQII), 246–279 (GTIEHNLGYLMSMKHEHYEAIQHYKKSLLYKRNS), and 285–318 (FITLFSLIKEYYVSKNYKKALANVEESLQLLKRE).

Its function is as follows. Activates the transcription of nprS by about five fold. May bind to the upstream region of nprS promoter. In Geobacillus stearothermophilus (Bacillus stearothermophilus), this protein is Transcriptional activator NprA (nprA).